A 484-amino-acid chain; its full sequence is uncharacterized protein (484 aa).

The FAD-binding PCMH-type domain maps to Thr47–Phe226.

Belongs to the FAD-binding oxidoreductase/transferase type 4 family.

This is an uncharacterized protein from Escherichia coli (strain K12).